The following is a 1104-amino-acid chain: tRNA ligase 1 (1104 aa).

The N6-AMP-lysine intermediate role is filled by Lys152.

This sequence belongs to the TRL1 family. The cofactor is Mg(2+). In terms of tissue distribution, mainly expressed in proliferating cells and tissues such as root meristems, the vasculature of developing plantlets, flowers and elongating tissue.

The protein localises to the nucleus. It localises to the cytoplasm. The enzyme catalyses ATP + (ribonucleotide)n-3'-hydroxyl + 5'-phospho-(ribonucleotide)m = (ribonucleotide)n+m + AMP + diphosphate.. Requires the presence of NTP, preferentially ATP rather than dATP, UTP, CTP and GTP, respectively, to mediate ribonucleotide 5'-phosphorylation. In terms of biological role, essential component of stress-response pathways entailing repair of RNA breaks with 2',3'-cyclic phosphate and 5'-OH ends. Tri-functional enzyme that repairs RNA breaks with 2',3'-cyclic-PO(4) and 5'-OH ends. The ligation activity requires three sequential enzymatic activities: opening of the 2'3'-cyclic phosphodiester bond of the 5' half-tRNA leaving a 2'-phosphomonoester (CPDase activity), phosphorylation of the 5' terminus of the 3' half-tRNA in the presence of ATP (kinase activity) and ligation of the two tRNA halves in an ATP-dependent reaction (ligase activity). Deficient in transferring AMP to pRNA(OH) to form AppRNA(OH) but proficient at sealing pre-adenylylated AppRNA(OH). CPDase and kinase reactions are almost insensitive to RNA length, whereas the ligase activity decreases with shorter RNA size. Can also splice DNA ended by a single 3'-terminal ribonucleoside 2',3'-cyclic-PO(4). Binds to mRNA, mature and immature. Exhibits tRNA ligase activity in vitro. Required for the splicing of precursor tRNA molecules containing introns. Can circularize an intron cleaved from a pre-tRNA by splicing endonuclease in vitro. Seems not involved in unfolded protein response (UPR) in the endoplasmic reticulum. Involved in auxin signaling and polar transport during organ morphogenesis. The chain is tRNA ligase 1 from Arabidopsis thaliana (Mouse-ear cress).